Consider the following 342-residue polypeptide: UDP-3-O-acylglucosamine N-acyltransferase (342 aa).

The active-site Proton acceptor is the His-242.

Belongs to the transferase hexapeptide repeat family. LpxD subfamily. Homotrimer.

The catalysed reaction is a UDP-3-O-[(3R)-3-hydroxyacyl]-alpha-D-glucosamine + a (3R)-hydroxyacyl-[ACP] = a UDP-2-N,3-O-bis[(3R)-3-hydroxyacyl]-alpha-D-glucosamine + holo-[ACP] + H(+). It functions in the pathway bacterial outer membrane biogenesis; LPS lipid A biosynthesis. Functionally, catalyzes the N-acylation of UDP-3-O-acylglucosamine using 3-hydroxyacyl-ACP as the acyl donor. Is involved in the biosynthesis of lipid A, a phosphorylated glycolipid that anchors the lipopolysaccharide to the outer membrane of the cell. The chain is UDP-3-O-acylglucosamine N-acyltransferase from Leptothrix cholodnii (strain ATCC 51168 / LMG 8142 / SP-6) (Leptothrix discophora (strain SP-6)).